Here is a 206-residue protein sequence, read N- to C-terminus: Protein DEHYDRATION-INDUCED 19 (206 aa).

At threonine 105 the chain carries Phosphothreonine. Serine 107 carries the phosphoserine modification. Residues 142-167 (SSFISPTRSQSSPAPRQTKNVSEDKQ) are disordered. The span at 143-161 (SFISPTRSQSSPAPRQTKN) shows a compositional bias: polar residues.

This sequence belongs to the Di19 family. In terms of assembly, interacts with ADO2/LKP2, CPK11 and CPK4. Weak interaction with CPK12 and no interactions with CPK1, CPK5 or CPK26. Post-translationally, phosphorylated within the NLS/NES region. Expressed in seedlings, roots, leaves, stems, flowers and siliques.

The protein localises to the nucleus. In Arabidopsis thaliana (Mouse-ear cress), this protein is Protein DEHYDRATION-INDUCED 19 (DI19-1).